A 484-amino-acid polypeptide reads, in one-letter code: Hexokinase-1 (484 aa).

In terms of domain architecture, Hexokinase spans lysine 25–alanine 465. A hexokinase small subdomain region spans residues aspartate 79–leucine 212. Aspartate 90–asparagine 95 contributes to the ATP binding site. Substrate-binding positions include serine 160–tyrosine 161, threonine 177–lysine 178, and serine 213–aspartate 214. Positions serine 213–aspartate 454 are hexokinase large subdomain. Position 237 (threonine 237) interacts with ATP. Residues asparagine 240, glutamate 269, and glutamate 302 each coordinate substrate. ATP-binding positions include glycine 307–cysteine 308, threonine 344–serine 348, and serine 419–leucine 423.

Belongs to the hexokinase family. In terms of assembly, monomer.

The enzyme catalyses a D-hexose + ATP = a D-hexose 6-phosphate + ADP + H(+). It catalyses the reaction D-mannose + ATP = D-mannose 6-phosphate + ADP + H(+). The catalysed reaction is D-fructose + ATP = D-fructose 6-phosphate + ADP + H(+). It carries out the reaction D-glucose + ATP = D-glucose 6-phosphate + ADP + H(+). It functions in the pathway carbohydrate metabolism; hexose metabolism. Its pathway is carbohydrate degradation; glycolysis; D-glyceraldehyde 3-phosphate and glycerone phosphate from D-glucose: step 1/4. Its function is as follows. Catalyzes the phosphorylation of hexose (six-carbon sugars) to hexose 6-phosphate. Phosphorylates D-fructose, D-mannose and, to a lower extent, D-glucose. Compared to hxk2, has low affinity for D-glucose. The chain is Hexokinase-1 from Schizosaccharomyces pombe (strain 972 / ATCC 24843) (Fission yeast).